Consider the following 454-residue polypeptide: Oxygen-dependent coproporphyrinogen-III oxidase, mitochondrial (454 aa).

Residues 1 to 110 (MALQLGRLSS…MLPKTSGTRA (110 aa)) constitute a mitochondrion transit peptide. The disordered stretch occupies residues 43-70 (AAGRVCRPPGPAGTEQSRGLGHGSTSRG). Ser112 is subject to Phosphoserine. The interval 193 to 202 (VLQDGCVFEK) is important for dimerization. Coproporphyrinogen III is bound at residue Ser244. The Proton donor role is filled by His258. 260–262 (NYR) is a binding site for coproporphyrinogen III. An important for dimerization region spans residues 392 to 428 (YVEFNLLYDRGTKFGLFTPGSRIESILMSLPLTARWE). N6-acetyllysine; alternate is present on Lys404. The residue at position 404 (Lys404) is an N6-succinyllysine; alternate. 411-413 (GSR) is a binding site for coproporphyrinogen III.

The protein belongs to the aerobic coproporphyrinogen-III oxidase family. As to quaternary structure, homodimer.

Its subcellular location is the mitochondrion intermembrane space. The catalysed reaction is coproporphyrinogen III + O2 + 2 H(+) = protoporphyrinogen IX + 2 CO2 + 2 H2O. The protein operates within porphyrin-containing compound metabolism; protoporphyrin-IX biosynthesis; protoporphyrinogen-IX from coproporphyrinogen-III (O2 route): step 1/1. Functionally, catalyzes the aerobic oxidative decarboxylation of propionate groups of rings A and B of coproporphyrinogen-III to yield the vinyl groups in protoporphyrinogen-IX and participates to the sixth step in the heme biosynthetic pathway. This is Oxygen-dependent coproporphyrinogen-III oxidase, mitochondrial from Homo sapiens (Human).